Here is a 170-residue protein sequence, read N- to C-terminus: MAILDICTYPDPILRQKAASVENIDEALIKLIDDMTETMYEAPGIGLAANQVGRSLSLIVVDLQRQDEEHGLIVLINPQIVATQGEITWEEGCLSVPEYFSAVKRHAEVVVRGYGRDGKEMEIQAGGLLAVALQHEIDHLEGRLFIDRLNPITRDIFKRKWKKKLKEATA.

Fe cation-binding residues include Cys-93 and His-135. The active site involves Glu-136. Residue His-139 participates in Fe cation binding.

Belongs to the polypeptide deformylase family. Requires Fe(2+) as cofactor.

It catalyses the reaction N-terminal N-formyl-L-methionyl-[peptide] + H2O = N-terminal L-methionyl-[peptide] + formate. Functionally, removes the formyl group from the N-terminal Met of newly synthesized proteins. Requires at least a dipeptide for an efficient rate of reaction. N-terminal L-methionine is a prerequisite for activity but the enzyme has broad specificity at other positions. This Syntrophobacter fumaroxidans (strain DSM 10017 / MPOB) protein is Peptide deformylase.